A 585-amino-acid chain; its full sequence is Arginine--tRNA ligase (585 aa).

The 'HIGH' region motif lies at 131-141 (ANPTGPMHVGH).

This sequence belongs to the class-I aminoacyl-tRNA synthetase family. As to quaternary structure, monomer.

The protein localises to the cytoplasm. The catalysed reaction is tRNA(Arg) + L-arginine + ATP = L-arginyl-tRNA(Arg) + AMP + diphosphate. The protein is Arginine--tRNA ligase of Agrobacterium fabrum (strain C58 / ATCC 33970) (Agrobacterium tumefaciens (strain C58)).